The primary structure comprises 132 residues: Nucleoid-associated protein EspR (132 aa).

The segment at residues 38–50 is a DNA-binding region (H-T-H motif); that stretch reads ITMSAPYLSQLRS.

As to quaternary structure, homodimer. Binds DNA as a dimer of dimers.

It is found in the cytoplasm. It localises to the nucleoid. In terms of biological role, virulence regulator that has both architectural and regulatory roles. Impacts cell wall functions and pathogenesis through regulation of multiple genes. The chain is Nucleoid-associated protein EspR from Mycobacterium tuberculosis (strain CDC 1551 / Oshkosh).